Here is a 273-residue protein sequence, read N- to C-terminus: Progestin and adipoQ receptor family member 4 (273 aa).

5 helical membrane passes run 52–72, 79–99, 115–135, 185–205, and 245–265; these read IYTH…TMPW, GWLG…SVLY, LLAL…LPII, LLVF…SLPC, and LLSV…LLWA.

This sequence belongs to the ADIPOR family. Interacts with CERS2 and CERS5; the interaction regulates CERS2 and CERS5 stabilities and activities and is inhibited in presence of ceramides. Expressed in adipose tissue.

The protein resides in the golgi apparatus membrane. In terms of biological role, plays a role in maintaining adipose tissue function through the regulation of ceramide levels. Mediates the stability of ceramide synthetases, CERS2 and CERS5, and their activities. This chain is Progestin and adipoQ receptor family member 4, found in Mus musculus (Mouse).